The primary structure comprises 432 residues: Glyceraldehyde-3-phosphate dehydrogenase, testis-specific (432 aa).

The testis-specific N-terminal extension stretch occupies residues 1–97; it reads MSRRDVVLTN…PPPPPPPKPA (97 aa). The tract at residues 40–101 is disordered; sequence PPPPKVEEPP…PPPKPAKELT (62 aa). Basic and acidic residues predominate over residues 44 to 55; it reads KVEEPPPPKEEP. Pro residues-rich tracts occupy residues 56 to 67 and 75 to 95; these read PPPPPPPPPPQI and APPP…PPPK. NAD(+) is bound by residues 109 to 110, Asp130, Lys175, Tyr197, and Thr217; that span reads RI. Residues 247–249, Thr278, 307–308, and Arg330 contribute to the D-glyceraldehyde 3-phosphate site; these read SCT and TG. Cys248 functions as the Nucleophile in the catalytic mechanism. The residue at position 350 (Ser350) is a Phosphoserine. Residue Asn412 participates in NAD(+) binding.

The protein belongs to the glyceraldehyde-3-phosphate dehydrogenase family. Homotetramer. In terms of tissue distribution, expressed in both head and flagellum of epididymal sperm.

The protein localises to the cytoplasm. The catalysed reaction is D-glyceraldehyde 3-phosphate + phosphate + NAD(+) = (2R)-3-phospho-glyceroyl phosphate + NADH + H(+). Its pathway is carbohydrate degradation; glycolysis; pyruvate from D-glyceraldehyde 3-phosphate: step 1/5. Functionally, may play an important role in regulating the switch between different pathways for energy production during spermiogenesis and in the spermatozoon. Required for sperm motility and male fertility. The protein is Glyceraldehyde-3-phosphate dehydrogenase, testis-specific (Gapdhs) of Rattus norvegicus (Rat).